Consider the following 387-residue polypeptide: O-methyltransferase fsr2 (387 aa).

Asp231 is an S-adenosyl-L-methionine binding site. The active-site Proton acceptor is His280.

Belongs to the class I-like SAM-binding methyltransferase superfamily. Cation-independent O-methyltransferase family. COMT subfamily.

Its pathway is polyketide biosynthesis. Functionally, O-methyltransferase; part of the gene cluster that mediates the biosynthesis of fusarubins, highly pigmented naphthoquinones responsible for the coloration of the fruiting bodies. The non-reducing polyketide synthase FSR1 is responsible for the condensation of seven acetyl-CoA units to yield a haptaketide. After rings A and B are formed by aldol-type cyclization, the PKS-derived product is released as 6-O-demethylfusarubinaldehyde. Then, two hydroxyl groups at C-5 and C-10 are incorporated by FSR3, and simultaneously hydroxyl groups at C-6 and C-8 are methylated by FSR2. The aldehyde is, on the one hand, reduced by FSR3 to 8-O-methylfusarubin alcohol, which equilibrates mainly with 8-O-methylfusarubin and only small amounts of 8-O-methylnectriafurone. On the other hand, the aldehyde can be oxidized to form 8-O-methylfusarubinic acid, a reaction driven by FSR3 equilibrating with 8-O-methylfusarubinlactone, finally resulting in 8-O-methylanhydrofusarubinlactol after a further reduction step and loss of water. 8-O-Methylfusarubinic acid can also undergo decarboxylation, resulting in 8-O-methyl-13-hydroxynorjavanicin after another hydroxylation step at C-13. Both steps are most likely also accomplished by FSR3. No enzymatic function has been determined so far for either FSR4 and FSR5. Their deletion does not alter the product spectrum, but the possibility that they catalyze specific enzymatic steps during perithecium development cannot be ruled out. FSR4 might possess a regulatory function in the biosynthesis of fusarubins. This Gibberella fujikuroi (strain CBS 195.34 / IMI 58289 / NRRL A-6831) (Bakanae and foot rot disease fungus) protein is O-methyltransferase fsr2.